A 557-amino-acid polypeptide reads, in one-letter code: 2-succinyl-5-enolpyruvyl-6-hydroxy-3-cyclohexene-1-carboxylate synthase (557 aa).

This sequence belongs to the TPP enzyme family. MenD subfamily. As to quaternary structure, homodimer. The cofactor is Mg(2+). It depends on Mn(2+) as a cofactor. Thiamine diphosphate serves as cofactor.

It carries out the reaction isochorismate + 2-oxoglutarate + H(+) = 5-enolpyruvoyl-6-hydroxy-2-succinyl-cyclohex-3-ene-1-carboxylate + CO2. It functions in the pathway quinol/quinone metabolism; 1,4-dihydroxy-2-naphthoate biosynthesis; 1,4-dihydroxy-2-naphthoate from chorismate: step 2/7. The protein operates within quinol/quinone metabolism; menaquinone biosynthesis. Its function is as follows. Catalyzes the thiamine diphosphate-dependent decarboxylation of 2-oxoglutarate and the subsequent addition of the resulting succinic semialdehyde-thiamine pyrophosphate anion to isochorismate to yield 2-succinyl-5-enolpyruvyl-6-hydroxy-3-cyclohexene-1-carboxylate (SEPHCHC). The protein is 2-succinyl-5-enolpyruvyl-6-hydroxy-3-cyclohexene-1-carboxylate synthase of Phocaeicola vulgatus (strain ATCC 8482 / DSM 1447 / JCM 5826 / CCUG 4940 / NBRC 14291 / NCTC 11154) (Bacteroides vulgatus).